The chain runs to 219 residues: LHFPL tetraspan subfamily member 5 protein (219 aa).

Over 1–24 (MVKLLPAQEAAKIYHTNYVRNSRA) the chain is Cytoplasmic. Residues 25 to 45 (VGVMWGTLTICFSVLVMALFI) traverse the membrane as a helical segment. Residues 46–98 (QPYWIGDSVSTPQAGYFGLFSYCVGNVLSSELICKGGPLDFSSIPSRAFKTAM) lie on the Extracellular side of the membrane. Residues 99–119 (FFVALAMFLIIGSIICFSLFF) traverse the membrane as a helical segment. Topologically, residues 120-128 (VCNTATVYK) are cytoplasmic. A helical membrane pass occupies residues 129–149 (ICAWMQLAAATGLMIGCLVYP). Residues 150–178 (DGWDSSEVRRMCGEQTGKYTLGHCTIRWA) are Extracellular-facing. The helical transmembrane segment at 179-199 (FMLAILSIGDALILSFLAFVL) threads the bilayer. Residues 200-219 (GYRQDKLLPDDYKADGNEEV) are Cytoplasmic-facing.

This sequence belongs to the LHFP family. In terms of assembly, forms the MET channel composed of TMC (TMC1 or TMC2), TMIE, TOMT, CIB (CIB2 or CIB3), LHPL5 and PCDH15. Interaction with PCDH15 is required for efficient localization to hair bundles.

The protein localises to the cell membrane. Auxiliary subunit of the mechanotransducer (MET) non-specific cation channel complex located at the tips of the shorter stereocilia of cochlear hair cells and that mediates sensory transduction in the auditory system. The MET complex is composed of two dimeric pore-forming ion-conducting transmembrane TMC (TMC1 or TMC2) subunits, and aided by several auxiliary proteins including LHFPL5, TMIE, CIB2/3 and TOMT, and the tip-link PCDH15. Functionally couples PCDH15 to the transduction channel. The protein is LHFPL tetraspan subfamily member 5 protein of Rattus norvegicus (Rat).